The sequence spans 500 residues: Lysine--tRNA ligase (500 aa).

Residues glutamate 402 and glutamate 409 each coordinate Mg(2+).

Belongs to the class-II aminoacyl-tRNA synthetase family. Homodimer. It depends on Mg(2+) as a cofactor.

It localises to the cytoplasm. It carries out the reaction tRNA(Lys) + L-lysine + ATP = L-lysyl-tRNA(Lys) + AMP + diphosphate. The polypeptide is Lysine--tRNA ligase (Buchnera aphidicola subsp. Baizongia pistaciae (strain Bp)).